Here is a 348-residue protein sequence, read N- to C-terminus: Phosphoribosylformylglycinamidine cyclo-ligase (348 aa).

This sequence belongs to the AIR synthase family.

The protein localises to the cytoplasm. It catalyses the reaction 2-formamido-N(1)-(5-O-phospho-beta-D-ribosyl)acetamidine + ATP = 5-amino-1-(5-phospho-beta-D-ribosyl)imidazole + ADP + phosphate + H(+). It participates in purine metabolism; IMP biosynthesis via de novo pathway; 5-amino-1-(5-phospho-D-ribosyl)imidazole from N(2)-formyl-N(1)-(5-phospho-D-ribosyl)glycinamide: step 2/2. The polypeptide is Phosphoribosylformylglycinamidine cyclo-ligase (Cereibacter sphaeroides (strain ATCC 17025 / ATH 2.4.3) (Rhodobacter sphaeroides)).